A 451-amino-acid polypeptide reads, in one-letter code: Chromosomal replication initiator protein DnaA (451 aa).

The tract at residues 1–71 (MSEKEIWDKV…QAIIYDVIGY (71 aa)) is domain I, interacts with DnaA modulators. Residues 71-112 (YEVKPHFISEDELASYNNVNTQEVQEPQVQHSSIDDKTWGKE) form a domain II region. The segment at 113 to 329 (QFNMHNTFDT…GALTRLLAYS (217 aa)) is domain III, AAA+ region. Residues G157, G159, K160, and T161 each coordinate ATP. Residues 330–451 (KLQGKPITTE…ENLEKEIRNQ (122 aa)) form a domain IV, binds dsDNA region.

It belongs to the DnaA family. As to quaternary structure, oligomerizes as a right-handed, spiral filament on DNA at oriC.

The protein resides in the cytoplasm. Plays an essential role in the initiation and regulation of chromosomal replication. ATP-DnaA binds to the origin of replication (oriC) to initiate formation of the DNA replication initiation complex once per cell cycle. Binds the DnaA box (a 9 base pair repeat at the origin) and separates the double-stranded (ds)DNA. Forms a right-handed helical filament on oriC DNA; dsDNA binds to the exterior of the filament while single-stranded (ss)DNA is stabiized in the filament's interior. The ATP-DnaA-oriC complex binds and stabilizes one strand of the AT-rich DNA unwinding element (DUE), permitting loading of DNA polymerase. After initiation quickly degrades to an ADP-DnaA complex that is not apt for DNA replication. Binds acidic phospholipids. The protein is Chromosomal replication initiator protein DnaA of Staphylococcus epidermidis (strain ATCC 35984 / DSM 28319 / BCRC 17069 / CCUG 31568 / BM 3577 / RP62A).